A 233-amino-acid chain; its full sequence is Enolase-phosphatase E1 (233 aa).

Mg(2+)-binding residues include Asp16 and Glu18. Substrate-binding positions include 131–132 (SS) and Lys167. Residue Asp193 participates in Mg(2+) binding.

This sequence belongs to the HAD-like hydrolase superfamily. MasA/MtnC family. As to quaternary structure, monomer. The cofactor is Mg(2+).

The protein localises to the cytoplasm. It localises to the nucleus. The enzyme catalyses 5-methylsulfanyl-2,3-dioxopentyl phosphate + H2O = 1,2-dihydroxy-5-(methylsulfanyl)pent-1-en-3-one + phosphate. Its pathway is amino-acid biosynthesis; L-methionine biosynthesis via salvage pathway; L-methionine from S-methyl-5-thio-alpha-D-ribose 1-phosphate: step 3/6. It functions in the pathway amino-acid biosynthesis; L-methionine biosynthesis via salvage pathway; L-methionine from S-methyl-5-thio-alpha-D-ribose 1-phosphate: step 4/6. Functionally, bifunctional enzyme that catalyzes the enolization of 2,3-diketo-5-methylthiopentyl-1-phosphate (DK-MTP-1-P) into the intermediate 2-hydroxy-3-keto-5-methylthiopentenyl-1-phosphate (HK-MTPenyl-1-P), which is then dephosphorylated to form the acireductone 1,2-dihydroxy-3-keto-5-methylthiopentene (DHK-MTPene). This Meyerozyma guilliermondii (strain ATCC 6260 / CBS 566 / DSM 6381 / JCM 1539 / NBRC 10279 / NRRL Y-324) (Yeast) protein is Enolase-phosphatase E1.